The sequence spans 361 residues: MVDNMISKAYYTTEIPEDRFEALSCIKDSQKPLKIILLGGVDSGKTTLATFLANELLNLGFKVAIVDSDVGQKSILPPATISLAFPETNFNNLYEIKPYKSYFVGSTAPIQFFGEMITGTKLLCDYAEDKADIIIVDTTGLISGSGADLKRMKIEMIKPDIIIALEKRNELKSILKPFENKIRVFYLKVYENAKSFSREERKEIRAEKWKEYFKNSKIYNIGFNDVVIGGTKVFQGEKILEDEKYLLESLFKWKILYGSKCDGRYTIVKRDLVNMPRQIDKNILYYIEPERFNNLIVGLIDEDSFCIGLGILKTIDFENETLEILTPISEEDIKNIREIRFGRIRVDENGEELGLLDRDSI.

39–46 (GGVDSGKT) is a binding site for ATP.

A divalent metal cation is required as a cofactor.

The catalysed reaction is a 5'-end dephospho-2'-deoxyribonucleoside-DNA + ATP = a 5'-end 5'-phospho-2'-deoxyribonucleoside-DNA + ADP + H(+). The enzyme catalyses a 5'-end dephospho-ribonucleoside-RNA + ATP = a 5'-end 5'-phospho-ribonucleoside-RNA + ADP + H(+). Its function is as follows. Polynucleotide kinase that can phosphorylate the 5'-hydroxyl groups of both single-stranded RNA (ssRNA) and single-stranded DNA (ssDNA). Exhibits a strong preference for ssRNA. The protein is Polyribonucleotide 5'-hydroxyl-kinase MJ1315 of Methanocaldococcus jannaschii (strain ATCC 43067 / DSM 2661 / JAL-1 / JCM 10045 / NBRC 100440) (Methanococcus jannaschii).